The sequence spans 216 residues: Histidine biosynthesis bifunctional protein HisIE (216 aa).

The phosphoribosyl-AMP cyclohydrolase stretch occupies residues methionine 1–threonine 127. The phosphoribosyl-ATP pyrophosphohydrolase stretch occupies residues leucine 128–arginine 216.

The protein in the N-terminal section; belongs to the PRA-CH family. This sequence in the C-terminal section; belongs to the PRA-PH family.

It localises to the cytoplasm. It catalyses the reaction 1-(5-phospho-beta-D-ribosyl)-ATP + H2O = 1-(5-phospho-beta-D-ribosyl)-5'-AMP + diphosphate + H(+). The enzyme catalyses 1-(5-phospho-beta-D-ribosyl)-5'-AMP + H2O = 1-(5-phospho-beta-D-ribosyl)-5-[(5-phospho-beta-D-ribosylamino)methylideneamino]imidazole-4-carboxamide. The protein operates within amino-acid biosynthesis; L-histidine biosynthesis; L-histidine from 5-phospho-alpha-D-ribose 1-diphosphate: step 2/9. Its pathway is amino-acid biosynthesis; L-histidine biosynthesis; L-histidine from 5-phospho-alpha-D-ribose 1-diphosphate: step 3/9. The chain is Histidine biosynthesis bifunctional protein HisIE (hisI) from Nostoc sp. (strain PCC 7120 / SAG 25.82 / UTEX 2576).